A 197-amino-acid chain; its full sequence is Glycerol-3-phosphate acyltransferase (197 aa).

A run of 4 helical transmembrane segments spans residues 5–25 (LILI…VGKI), 70–90 (LPVL…AVIG), 111–131 (VMLF…FIVL), and 153–173 (IFFT…AFIF).

The protein belongs to the PlsY family. In terms of assembly, probably interacts with PlsX.

Its subcellular location is the cell membrane. The catalysed reaction is an acyl phosphate + sn-glycerol 3-phosphate = a 1-acyl-sn-glycero-3-phosphate + phosphate. The protein operates within lipid metabolism; phospholipid metabolism. Catalyzes the transfer of an acyl group from acyl-phosphate (acyl-PO(4)) to glycerol-3-phosphate (G3P) to form lysophosphatidic acid (LPA). This enzyme utilizes acyl-phosphate as fatty acyl donor, but not acyl-CoA or acyl-ACP. The sequence is that of Glycerol-3-phosphate acyltransferase from Geobacillus sp. (strain WCH70).